The primary structure comprises 1663 residues: TPR repeat-containing protein DDB_G0287407 (1663 aa).

2 disordered regions span residues Arg-84–Gln-109 and Ser-326–Gln-359. The segment covering Thr-89–Thr-105 has biased composition (low complexity). Residues Asp-333–Phe-352 show a composition bias toward acidic residues. TPR repeat units lie at residues Ser-1110 to Asn-1143, Ala-1150 to Glu-1183, Ala-1192 to Lys-1225, Ala-1234 to Lys-1269, Ala-1278 to Arg-1311, and Ser-1320 to Ile-1353. Disordered regions lie at residues Val-1500 to Arg-1528 and Gln-1544 to Thr-1571. Residues Arg-1516–Ser-1547 adopt a coiled-coil conformation. 2 stretches are compositionally biased toward low complexity: residues Gln-1518–Arg-1528 and Gln-1544–Gln-1563.

This chain is TPR repeat-containing protein DDB_G0287407, found in Dictyostelium discoideum (Social amoeba).